A 181-amino-acid chain; its full sequence is ADP-ribosylation factor 1-like 2 (181 aa).

Gly-2 is lipidated: N-myristoyl glycine. The segment at 3–16 (NVFGSLFKGLFGKK) is important for the stable binding to the membranes. Residues 24 to 32 (GLDAAGKTT), 126 to 129 (NKQD), and Ala-160 contribute to the GTP site.

Belongs to the small GTPase superfamily. Arf family.

It localises to the golgi apparatus membrane. It carries out the reaction GTP + H2O = GDP + phosphate + H(+). Alternates between an inactive GDP-bound form and an active GTP-bound form. Activated by a guanine nucleotide-exchange factor (GEF) and inactivated by GTPase-activating protein (GAP). Small GTPase involved in protein trafficking between different compartments. Modulates vesicle budding and uncoating within the Golgi complex. In its GTP-bound form, triggers the recruitment of coatomer proteins to the Golgi membrane. The hydrolysis of ARF1-bound GTP, which is mediated by ARFGAPs proteins, is required for dissociation of coat proteins from Golgi membranes and vesicles. Involved in endoplasmic reticulum dynamics during embryogenesis. Also required for adult germline function. Plays a role in cell shedding during embryogenesis probably by promoting the endocytosis of cell adhesion molecules. During neurogenesis, involved in cell autonomous Q.p neuroblast asymmetric divisions that generate one precursor cell and one apoptotic cell, probably by controlling endocytosis. Plays a role in maintaining mitochondrial morphology. In Caenorhabditis briggsae, this protein is ADP-ribosylation factor 1-like 2 (arf-1.2).